The primary structure comprises 557 residues: Membrane protein insertase YidC (557 aa).

The next 3 membrane-spanning stretches (helical) occupy residues Trp371–Ala391, Leu437–Leu457, and Pro515–Val535.

It belongs to the OXA1/ALB3/YidC family. Type 1 subfamily. In terms of assembly, interacts with the Sec translocase complex via SecD. Specifically interacts with transmembrane segments of nascent integral membrane proteins during membrane integration.

It localises to the cell inner membrane. In terms of biological role, required for the insertion and/or proper folding and/or complex formation of integral membrane proteins into the membrane. Involved in integration of membrane proteins that insert both dependently and independently of the Sec translocase complex, as well as at least some lipoproteins. Aids folding of multispanning membrane proteins. This chain is Membrane protein insertase YidC, found in Polynucleobacter necessarius subsp. necessarius (strain STIR1).